The following is a 563-amino-acid chain: Arginine--tRNA ligase (563 aa).

Residues Pro-121 to His-131 carry the 'HIGH' region motif.

It belongs to the class-I aminoacyl-tRNA synthetase family. As to quaternary structure, monomer.

It is found in the cytoplasm. It carries out the reaction tRNA(Arg) + L-arginine + ATP = L-arginyl-tRNA(Arg) + AMP + diphosphate. The chain is Arginine--tRNA ligase from Leuconostoc citreum (strain KM20).